The sequence spans 508 residues: Photosystem II CP47 reaction center protein (508 aa).

6 helical membrane-spanning segments follow: residues 21–36, 101–115, 140–156, 203–218, 237–252, and 457–472; these read AVHIMHTALVSGWAGS, IILSGLLFLAAIWHW, GIHLFLSGLLCFGFGAF, IAAGILGILAGLFHLS, VLSSSIAAVFWAAFVV, and NFALLFFFGHIWHGGR.

It belongs to the PsbB/PsbC family. PsbB subfamily. In terms of assembly, PSII is composed of 1 copy each of membrane proteins PsbA, PsbB, PsbC, PsbD, PsbE, PsbF, PsbH, PsbI, PsbJ, PsbK, PsbL, PsbM, PsbT, PsbX, PsbY, PsbZ, Psb30/Ycf12, at least 3 peripheral proteins of the oxygen-evolving complex and a large number of cofactors. It forms dimeric complexes. Binds multiple chlorophylls. PSII binds additional chlorophylls, carotenoids and specific lipids. serves as cofactor.

It localises to the plastid. Its subcellular location is the chloroplast thylakoid membrane. One of the components of the core complex of photosystem II (PSII). It binds chlorophyll and helps catalyze the primary light-induced photochemical processes of PSII. PSII is a light-driven water:plastoquinone oxidoreductase, using light energy to abstract electrons from H(2)O, generating O(2) and a proton gradient subsequently used for ATP formation. The sequence is that of Photosystem II CP47 reaction center protein from Chaetosphaeridium globosum (Charophycean green alga).